The chain runs to 320 residues: Ferrochelatase (320 aa).

The Fe cation site is built by His-194 and Glu-275.

This sequence belongs to the ferrochelatase family. In terms of assembly, monomer.

The protein resides in the cytoplasm. The enzyme catalyses heme b + 2 H(+) = protoporphyrin IX + Fe(2+). Its pathway is porphyrin-containing compound metabolism; protoheme biosynthesis; protoheme from protoporphyrin-IX: step 1/1. Its function is as follows. Catalyzes the ferrous insertion into protoporphyrin IX. The chain is Ferrochelatase from Salmonella typhi.